The following is a 342-amino-acid chain: A-type ATP synthase subunit C (342 aa).

Belongs to the V-ATPase V0D/AC39 subunit family. Has multiple subunits with at least A(3), B(3), C, D, E, F, H, I and proteolipid K(x).

Its subcellular location is the cell membrane. Its function is as follows. Component of the A-type ATP synthase that produces ATP from ADP in the presence of a proton gradient across the membrane. This chain is A-type ATP synthase subunit C, found in Archaeoglobus fulgidus (strain ATCC 49558 / DSM 4304 / JCM 9628 / NBRC 100126 / VC-16).